The following is a 53-amino-acid chain: Dihydrolipoyl dehydrogenase (53 aa).

Residues 35 to 44 and lysine 53 contribute to the FAD site; that span reads EKYPTFGGTC. A disulfide bond links cysteine 44 and cysteine 49.

The protein belongs to the class-I pyridine nucleotide-disulfide oxidoreductase family. Homodimer. Requires FAD as cofactor.

It is found in the mitochondrion. It carries out the reaction N(6)-[(R)-dihydrolipoyl]-L-lysyl-[protein] + NAD(+) = N(6)-[(R)-lipoyl]-L-lysyl-[protein] + NADH + H(+). Lipoamide reduction and the NADH -&gt; NAD reaction are both completely inhibited by copper and cadmium ions. In terms of biological role, lipoamide dehydrogenase is a component of the glycine cleavage system as well as of the alpha-ketoacid dehydrogenase complexes. This enzyme has lipoamide dehydrogenase activity and NADH -&gt; NAD transhydrogenation activity. Also displays some NADH-ferricyanide reductase and NADPH -&gt; NAD transydrogenation activities. The chain is Dihydrolipoyl dehydrogenase from Hymenolepis diminuta (Rat tapeworm).